We begin with the raw amino-acid sequence, 349 residues long: UDP-3-O-acylglucosamine N-acyltransferase (349 aa).

The active-site Proton acceptor is the His242.

The protein belongs to the transferase hexapeptide repeat family. LpxD subfamily. As to quaternary structure, homotrimer.

The catalysed reaction is a UDP-3-O-[(3R)-3-hydroxyacyl]-alpha-D-glucosamine + a (3R)-hydroxyacyl-[ACP] = a UDP-2-N,3-O-bis[(3R)-3-hydroxyacyl]-alpha-D-glucosamine + holo-[ACP] + H(+). The protein operates within bacterial outer membrane biogenesis; LPS lipid A biosynthesis. Catalyzes the N-acylation of UDP-3-O-acylglucosamine using 3-hydroxyacyl-ACP as the acyl donor. Is involved in the biosynthesis of lipid A, a phosphorylated glycolipid that anchors the lipopolysaccharide to the outer membrane of the cell. The chain is UDP-3-O-acylglucosamine N-acyltransferase from Cytophaga hutchinsonii (strain ATCC 33406 / DSM 1761 / CIP 103989 / NBRC 15051 / NCIMB 9469 / D465).